The following is a 239-amino-acid chain: Exosome complex component Rrp4 (239 aa).

Residues 67–139 enclose the S1 motif domain; it reads GDFVVGIVEE…PVQRVELSLL (73 aa). The 67-residue stretch at 151-217 folds into the KH domain; that stretch reads QGGQVVEIDP…LAVRAIREIE (67 aa).

This sequence belongs to the RRP4 family. Component of the archaeal exosome complex. Forms a trimer of Rrp4 and/or Csl4 subunits. The trimer associates with a hexameric ring-like arrangement composed of 3 Rrp41-Rrp42 heterodimers.

Its subcellular location is the cytoplasm. In terms of biological role, non-catalytic component of the exosome, which is a complex involved in RNA degradation. Increases the RNA binding and the efficiency of RNA degradation. Confers strong poly(A) specificity to the exosome. The sequence is that of Exosome complex component Rrp4 from Methanopyrus kandleri (strain AV19 / DSM 6324 / JCM 9639 / NBRC 100938).